Consider the following 81-residue polypeptide: Relaxin-like protein AGF (81 aa).

Intrachain disulfides connect C14/C66, C26/C79, and C65/C70. Residue N37 is glycosylated (N-linked (GlcNAc...) asparagine).

It belongs to the insulin family. Heterodimer of a B chain and an A chain linked by two disulfide bonds.

It is found in the secreted. Its function is as follows. Uncertain. The polypeptide is Relaxin-like protein AGF (Hypanus sabinus (Atlantic stingray)).